A 304-amino-acid polypeptide reads, in one-letter code: Homoserine kinase (304 aa).

92-102 provides a ligand contact to ATP; that stretch reads PLARGLGSSAT.

Belongs to the GHMP kinase family. Homoserine kinase subfamily.

The protein resides in the cytoplasm. It carries out the reaction L-homoserine + ATP = O-phospho-L-homoserine + ADP + H(+). It participates in amino-acid biosynthesis; L-threonine biosynthesis; L-threonine from L-aspartate: step 4/5. In terms of biological role, catalyzes the ATP-dependent phosphorylation of L-homoserine to L-homoserine phosphate. This Nostoc punctiforme (strain ATCC 29133 / PCC 73102) protein is Homoserine kinase.